The primary structure comprises 682 residues: DNA-directed RNA polymerase subunit beta' (682 aa).

Zn(2+)-binding residues include C69, C71, C87, and C90. Mg(2+)-binding residues include D489, D491, and D493.

The protein belongs to the RNA polymerase beta' chain family. RpoC1 subfamily. In terms of assembly, in plastids the minimal PEP RNA polymerase catalytic core is composed of four subunits: alpha, beta, beta', and beta''. When a (nuclear-encoded) sigma factor is associated with the core the holoenzyme is formed, which can initiate transcription. Mg(2+) is required as a cofactor. It depends on Zn(2+) as a cofactor.

Its subcellular location is the plastid. It localises to the chloroplast. It carries out the reaction RNA(n) + a ribonucleoside 5'-triphosphate = RNA(n+1) + diphosphate. DNA-dependent RNA polymerase catalyzes the transcription of DNA into RNA using the four ribonucleoside triphosphates as substrates. This Acorus gramineus (Dwarf sweet flag) protein is DNA-directed RNA polymerase subunit beta'.